Reading from the N-terminus, the 264-residue chain is Major prion protein 1 (264 aa).

The signal sequence occupies residues M1 to C24. The tract at residues K25 to A241 is interaction with GRB2, ERI3 and SYN1. Residues P28 to T118 are disordered. Tandem repeats lie at residues S54 to Q62, P63 to Q70, P71 to Q78, P79 to Q86, P87 to Q94, and P95 to Q103. Residues S54 to Q103 are 6 X 8 AA tandem repeats of P-H-G-G-G-W-G-Q. Residues Q55 to H107 show a composition bias toward gly residues. The Cu(2+) site is built by H72, G73, G74, H80, G81, G82, H88, G89, G90, H96, G98, and G99. C190 and C225 are joined by a disulfide. N-linked (GlcNAc...) asparagine glycosylation is found at N192 and N208. A241 carries GPI-anchor amidated alanine lipidation. The propeptide at S242–G264 is removed in mature form.

The protein belongs to the prion family. Monomer and homodimer. Has a tendency to aggregate into amyloid fibrils containing a cross-beta spine, formed by a steric zipper of superposed beta-strands. Soluble oligomers may represent an intermediate stage on the path to fibril formation. Copper binding may promote oligomerization. Interacts with GRB2, APP, ERI3/PRNPIP and SYN1. Mislocalized cytosolically exposed PrP interacts with MGRN1; this interaction alters MGRN1 subcellular location and causes lysosomal enlargement. Interacts with KIAA1191.

It localises to the cell membrane. It is found in the golgi apparatus. Its function is as follows. Its primary physiological function is unclear. Has cytoprotective activity against internal or environmental stresses. May play a role in neuronal development and synaptic plasticity. May be required for neuronal myelin sheath maintenance. May play a role in iron uptake and iron homeostasis. Soluble oligomers are toxic to cultured neuroblastoma cells and induce apoptosis (in vitro). Association with GPC1 (via its heparan sulfate chains) targets PRNP to lipid rafts. Also provides Cu(2+) or Zn(2+) for the ascorbate-mediated GPC1 deaminase degradation of its heparan sulfate side chains. The sequence is that of Major prion protein 1 from Tragelaphus strepsiceros (Greater kudu).